Consider the following 79-residue polypeptide: MAKAELRKPKPKSNPLKAAKITEIDYKDVALLRKFISDRGKIRARRVTGVTVQEQRKIAQAVKNAREVALLPYAGAGRG.

Belongs to the bacterial ribosomal protein bS18 family. As to quaternary structure, part of the 30S ribosomal subunit. Forms a tight heterodimer with protein bS6.

Its function is as follows. Binds as a heterodimer with protein bS6 to the central domain of the 16S rRNA, where it helps stabilize the platform of the 30S subunit. In Micrococcus luteus (strain ATCC 4698 / DSM 20030 / JCM 1464 / CCM 169 / CCUG 5858 / IAM 1056 / NBRC 3333 / NCIMB 9278 / NCTC 2665 / VKM Ac-2230) (Micrococcus lysodeikticus), this protein is Small ribosomal subunit protein bS18.